The sequence spans 506 residues: 5-OH-xanthotoxin synthase (506 aa).

Residues 3–23 (PVVIFLVLAFPIASVYLLFYH) traverse the membrane as a helical segment. The tract at residues 365 to 370 (TGPLLI) is substrate specificity. Residue cysteine 446 participates in heme binding.

This sequence belongs to the cytochrome P450 family. It depends on heme as a cofactor.

The protein resides in the microsome membrane. It carries out the reaction xanthotoxin + reduced [NADPH--hemoprotein reductase] + O2 = 5-hydroxyxanthotoxin + oxidized [NADPH--hemoprotein reductase] + H2O + 2 H(+). Its pathway is secondary metabolite biosynthesis. In terms of biological role, involved in the biosynthesis of coumarins and furanocoumarins (FCs), natural products required for defense responses against attacks by predators with potential medical and agroindustrial usages such as anticoagulant, rodenticide and artificial vanilla substitutes. Catalyzes the conversion of xanthotoxin into 5-hydroxyxanthotoxin. This is 5-OH-xanthotoxin synthase from Pastinaca sativa (Wild parsnip).